The primary structure comprises 199 residues: MKSESAAIDIPESSSVAKGKAPLIAVSRNEKGGYRKGIAIFDFILRLAAIATALAAAAAMGTSDETLPFFTQFFQFQASYDDLPTFQFFVIAIAIVGGYLVLSLPFSIVAIVRPHAVGPRLLLIILDAVALTLNTAAGAAAAAIVYLAHNGNSNTNWLAICQQYGDFCQKVSGAVVASFITVVIFVFLIVLSAFALRRH.

The Cytoplasmic portion of the chain corresponds to 1–37 (MKSESAAIDIPESSSVAKGKAPLIAVSRNEKGGYRKG). Residues 38-58 (IAIFDFILRLAAIATALAAAA) form a helical membrane-spanning segment. Residues 59 to 87 (AMGTSDETLPFFTQFFQFQASYDDLPTFQ) lie on the Extracellular side of the membrane. A helical transmembrane segment spans residues 88-108 (FFVIAIAIVGGYLVLSLPFSI). Over 109-120 (VAIVRPHAVGPR) the chain is Cytoplasmic. The helical transmembrane segment at 121 to 141 (LLLIILDAVALTLNTAAGAAA) threads the bilayer. Residues 142 to 173 (AAIVYLAHNGNSNTNWLAICQQYGDFCQKVSG) are Extracellular-facing. Residues 174 to 194 (AVVASFITVVIFVFLIVLSAF) form a helical membrane-spanning segment. At 195-199 (ALRRH) the chain is on the cytoplasmic side.

The protein belongs to the Casparian strip membrane proteins (CASP) family. As to quaternary structure, homodimer and heterodimers.

The protein resides in the cell membrane. Its function is as follows. Regulates membrane-cell wall junctions and localized cell wall deposition. Required for establishment of the Casparian strip membrane domain (CSD) and the subsequent formation of Casparian strips, a cell wall modification of the root endodermis that determines an apoplastic barrier between the intraorganismal apoplasm and the extraorganismal apoplasm and prevents lateral diffusion. This chain is Casparian strip membrane protein 1, found in Populus trichocarpa (Western balsam poplar).